A 921-amino-acid polypeptide reads, in one-letter code: Protein translocase subunit SecA (921 aa).

ATP is bound by residues Gln87, 105–109 (GEGKT), and Asp515. The interval 575–594 (RRIDNQLRGRSGRQGDPGSS) is disordered. 4 residues coordinate Zn(2+): Cys905, Cys907, Cys916, and Cys917.

It belongs to the SecA family. As to quaternary structure, monomer and homodimer. Part of the essential Sec protein translocation apparatus which comprises SecA, SecYEG and auxiliary proteins SecDF-YajC and YidC. Requires Zn(2+) as cofactor.

The protein localises to the cell inner membrane. The protein resides in the cytoplasm. The catalysed reaction is ATP + H2O + cellular proteinSide 1 = ADP + phosphate + cellular proteinSide 2.. Functionally, part of the Sec protein translocase complex. Interacts with the SecYEG preprotein conducting channel. Has a central role in coupling the hydrolysis of ATP to the transfer of proteins into and across the cell membrane, serving both as a receptor for the preprotein-SecB complex and as an ATP-driven molecular motor driving the stepwise translocation of polypeptide chains across the membrane. The chain is Protein translocase subunit SecA from Polynucleobacter necessarius subsp. necessarius (strain STIR1).